Reading from the N-terminus, the 242-residue chain is Basic agglutinin (242 aa).

N-linked (GlcNAc...) asparagine glycosylation is found at Asn-45 and Asn-220.

The protein belongs to the leguminous lectin family.

Lectin. This chain is Basic agglutinin (WBAI), found in Psophocarpus tetragonolobus (Winged bean).